The sequence spans 687 residues: Adhesion G-protein coupled receptor G1 (687 aa).

Residues 1–25 (MTAQSLLQMTLFLLSLLFLVQGAHG) form the signal peptide. 26–33 (RGHREDFR) is a heparin binding site. Residues 26 to 402 (RGHREDFRFC…VEVDAVHKHY (377 aa)) lie on the Extracellular side of the membrane. 2 disulfide bridges follow: cysteine 35–cysteine 91 and cysteine 121–cysteine 177. Asparagine 39, asparagine 148, and asparagine 171 each carry an N-linked (GlcNAc...) asparagine glycan. 190-200 (LKHPQKASRRP) is a binding site for heparin. Positions 224 to 395 (DTVSFEEDRI…AVLMVSSVEV (172 aa)) constitute a GAIN-B domain. Residues asparagine 234, asparagine 303, asparagine 324, and asparagine 341 are each glycosylated (N-linked (GlcNAc...) asparagine). Disulfide bonds link cysteine 346/cysteine 377 and cysteine 366/cysteine 379. The segment at 346–395 (CVFWVEDPTLSSPGHWSSAGCETVRRETQTSCFCNHLTYFAVLMVSSVEV) is GPS. The segment at 384–397 (YFAVLMVSSVEVDA) is stachel. The chain crosses the membrane as a helical span at residues 403-423 (LSLLSYVGCVISALACVVTIA). The Cytoplasmic portion of the chain corresponds to 424 to 442 (AYLCSRRKPRDYTIKVHMN). A helical membrane pass occupies residues 443 to 463 (LLLAVFLLDMSFLLSEPVALT). The Extracellular segment spans residues 464–470 (GSEAGCR). Residues 471–491 (AGAIFLHFSLLACLSWMGLEG) traverse the membrane as a helical segment. The Cytoplasmic portion of the chain corresponds to 492–512 (YNLYRLVVEVFGTYVPGYLLK). Residues 513 to 533 (LSAMGWGFPIFLVTLVALVDV) traverse the membrane as a helical segment. At 534–570 (DNYGPIILAVHRTPESVIYPSMCWIRDSLVSYVTNLG) the chain is on the extracellular side. Residues 571–591 (LFSLVFLFNMAMLGTMVVQIL) traverse the membrane as a helical segment. The Cytoplasmic portion of the chain corresponds to 592-603 (RLRPHTQKWSHV). The chain crosses the membrane as a helical span at residues 604–624 (LTLLGLSLVLGLPWALIFFSF). The Extracellular portion of the chain corresponds to 625–630 (ASGTFQ). A helical transmembrane segment spans residues 631–651 (LVVLYLFSIITSFQGFLIFIW). Residues 652–687 (YWSMRLQARGGPSPLKSNSDSARLPISSGSTSSSRI) lie on the Cytoplasmic side of the membrane. The interval 664 to 687 (SPLKSNSDSARLPISSGSTSSSRI) is disordered. The segment covering 678–687 (SSGSTSSSRI) has biased composition (low complexity).

This sequence belongs to the G-protein coupled receptor 2 family. LN-TM7 subfamily. In terms of assembly, heterodimer of 2 chains generated by proteolytic processing; the large extracellular N-terminal fragment (ADGRG1 NT) and the membrane-bound C-terminal fragment (ADGRG1-CT) predominantly remain associated and non-covalently linked. ADGRG1 NT self-associates in a trans-trans manner; the homophilic interaction enhances receptor signaling. Interacts with TGM2. Interacts with heparin; leading to the reduction of ADGRG1 shedding. Interacts with COL3A1. Part of a GPCR-tetraspanin complex at least consisting of ADGRG1, CD81, eventually CD9, and GNA11 in which CD81 is enhancing the association of ADGRG1 with GNA11. In terms of processing, autoproteolytically cleaved into 2 fragments; the large extracellular N-terminal fragment (ADGRG1 NT) and the membrane-bound C-terminal fragment (ADGRG1 CT) predominantly remain associated and non-covalently linked. Shedding to yield the secreted ADGRG1 N-terminal fragment seems to involve metalloprotease(s). Post-translationally, ubiquitinated. Undergoes polyubiquitination upon activation.

It localises to the cell membrane. The protein localises to the secreted. It is found in the membrane raft. With respect to regulation, forms a heterodimer of 2 chains generated by proteolytic processing that remain associated through non-covalent interactions mediated by the GAIN-B domain. In the inactivated receptor, the Stachel sequence (also named stalk) is embedded in the GAIN-B domain, where it adopts a beta-strand conformation. On activation, the Stachel moves into the 7 transmembrane region and adopts a twisted hook-shaped configuration that forms contacts within the receptor, leading to coupling of a G-alpha protein, which activates signaling. The cleaved GAIN-B and N-terminal domains can then dissociate from the rest of the receptor. In terms of biological role, adhesion G-protein coupled receptor (aGPCR) for steroid hormone 17alpha-hydroxypregnenolone (17-OH), which is involved in cell adhesion and cell-cell interactions. Ligand binding causes a conformation change that triggers signaling via guanine nucleotide-binding proteins (G proteins) and modulates the activity of downstream effectors, such as RhoA pathway. ADGRG1 is coupled to G(12) and/or G(13) G proteins (GNA12 and GNA13, respectively) and mediates the activation Rho small GTPases. Acts as a potent suppressor of ferroptosis: binding to 17-OH-binding initiates signaling that down-regulates CD36 and alleviates ferroptosis-induced liver injury. Ligand-binding also induces cell adhesion activity via association with proteins such as collagen III/COL3A1 and TGM2. Mediates cell matrix adhesion in developing neurons and hematopoietic stem cells. Involved in cortical development, specifically in maintenance of the pial basement membrane integrity and in cortical lamination: association with COL3A1 in the developing brain inhibits neuronal migration via activation of the RhoA pathway. Together with TGM2, acts as a regulator of myelination and myelin repair in oligodendrocyte precursor cells. Acts as a hemostatic sensor of shear force: G protein-coupled receptor signaling is activated in response to shear force in platelets, promoting G(13) G protein signaling, and platelet shape change and aggregation in a COL3A1-dependent manner. Acts as an inhibitor of VEGFA production thereby inhibiting angiogenesis through a signaling pathway mediated by PRKCA. Plays a role in the maintenance of hematopoietic stem cells in bone marrow niche. Plays an essential role in testis development. The chain is Adhesion G-protein coupled receptor G1 (ADGRG1) from Pongo pygmaeus (Bornean orangutan).